The chain runs to 162 residues: Ecotin (162 aa).

The N-terminal stretch at 1–18 is a signal peptide; that stretch reads MFVPAVVFAALASTSAWA. An intrachain disulfide couples Cys-70 to Cys-107.

Belongs to the protease inhibitor I11 (ecotin) family. Homodimer.

It is found in the periplasm. Functionally, general inhibitor of pancreatic serine proteases: inhibits chymotrypsin, trypsin, elastases, factor X, kallikrein as well as a variety of other proteases. The polypeptide is Ecotin (Salmonella choleraesuis (strain SC-B67)).